The chain runs to 547 residues: Sodium/hydrogen exchanger 9B2 (547 aa).

Residues 1–68 (MEDEDKTAEC…PQDSPTEPNG (68 aa)) form a disordered region. The Cytoplasmic portion of the chain corresponds to 1–86 (MEDEDKTAEC…ACPPRGCLAR (86 aa)). Positions 23-45 (APPHHELQEERVMSLRGTDRSEP) are enriched in basic and acidic residues. Ser49 bears the Phosphoserine mark. Residues 87-104 (VITNGTMVVLLWAMVWSV) form a helical membrane-spanning segment. Residues 105–113 (TGPECLPGG) lie on the Extracellular side of the membrane. Residues 114–133 (NLFGIIILFYCSITGGKLFG) form a helical membrane-spanning segment. The Cytoplasmic segment spans residues 134–144 (LIKFPTLPPLP). The helical transmembrane segment at 145–161 (PLLGMLLAGFLLRNIPV) threads the bilayer. Topologically, residues 162 to 171 (INDSVRIQHK) are extracellular. Residues 172-189 (WSSSLRSIALSVILVRAG) form a helical membrane-spanning segment. Residues 190–200 (LGLDSKALRKL) lie on the Cytoplasmic side of the membrane. Residues 201–227 (KGVCVRLAMGPCIVEACASAILSHFLM) traverse the membrane as a helical segment. At 228 to 233 (GLPWQW) the chain is on the extracellular side. Residues 234–242 (GFILGFVVG) traverse the membrane as a helical segment. Residues 243 to 270 (AVSPAVVVPSMLLLQEGGYGVGKGIPTL) are Cytoplasmic-facing. The Na(+) site is built by Val244, Gly275, Asp278, and Asp279. Residues 271 to 290 (LMAAGSFDDILAITGFNTCL) form a helical membrane-spanning segment. Topologically, residues 291–300 (GVAFSTGSTV) are extracellular. Residues 301 to 324 (FNIFRGILEVVIGVAAGSFLGFFI) traverse the membrane as a helical segment. Residues 325-339 (QYFPSRDQDNLVWKR) lie on the Cytoplasmic side of the membrane. Residues 340–357 (AFLVLGFAVLAVFSSVYF) form a helical membrane-spanning segment. Residues 358 to 361 (SFPG) lie on the Extracellular side of the membrane. Residues 362 to 373 (SGGLCTLVMAFL) form a helical membrane-spanning segment. The Cytoplasmic segment spans residues 374–390 (AGMRWTDKKSEVEKVIA). A helical transmembrane segment spans residues 391–411 (VTWDVFQPLLFGLIGAEVSIV). The Extracellular portion of the chain corresponds to 412–417 (SLRAET). The chain crosses the membrane as a helical span at residues 418–440 (VGLCVATLSIAVLIRILTTFLMV). The Cytoplasmic portion of the chain corresponds to 441 to 461 (CFAGFNIKEKIFISFAWLPKA). Residues 462–473 (TVQAAIGSVALD) traverse the membrane as a helical segment. Topologically, residues 474 to 486 (TARSHGEKQLEDY) are extracellular. Residues 487–509 (GMDVLTVAFLAILITAPIGSLLI) traverse the membrane as a helical segment. The Cytoplasmic portion of the chain corresponds to 510 to 547 (GLLGPRVLQKSEHRTEEEVQGETSAHIQRKPEDSITEA). The tract at residues 522–547 (HRTEEEVQGETSAHIQRKPEDSITEA) is disordered. Positions 538–547 (RKPEDSITEA) are enriched in basic and acidic residues.

Belongs to the monovalent cation:proton antiporter 1 (CPA1) transporter (TC 2.A.36) family. In terms of assembly, homodimer; dimerization is essential for SLC9B2 activity. Lipids seem to play a role in the stabilization of the dimerization subdomain. As to expression, widely expressed. However expression seems to be restricted to specific cell types within individual organs, e.g. osteoclasts in the bone, distal tubules of the kidney or beta-cells of Langerhans islets. In sperm specifically present in the principal piece of sperm tail (at protein level).

The protein resides in the cell membrane. Its subcellular location is the mitochondrion membrane. The protein localises to the endosome membrane. It localises to the lysosome membrane. It is found in the recycling endosome membrane. The protein resides in the cytoplasmic vesicle. Its subcellular location is the secretory vesicle. The protein localises to the synaptic vesicle membrane. It localises to the cell projection. It is found in the cilium. The protein resides in the flagellum membrane. Its subcellular location is the basolateral cell membrane. The protein localises to the apical cell membrane. It catalyses the reaction Na(+)(in) + H(+)(out) = Na(+)(out) + H(+)(in). The catalysed reaction is Li(+)(out) + H(+)(in) = Li(+)(in) + H(+)(out). It carries out the reaction Li(+)(in) + Na(+)(out) = Li(+)(out) + Na(+)(in). Its activity is regulated as follows. Allosterically inhibited by the N-terminal domain. Inhibited by phloretin. Electroneutral Na(+) Li(+)/H(+) antiporter that extrudes Na(+) or Li(+) in exchange for external protons across the membrane. Uses the proton gradient/membrane potential to extrude sodium. Contributes to the regulation of intracellular pH and sodium homeostasis. Also able to mediate Na(+)/Li(+) antiporter activity in kidney. May play a physiological role in renal tubular function and blood pressure homeostasis. Plays an important role for insulin secretion and clathrin-mediated endocytosis in beta-cells. Involved in sperm motility and fertility. It is controversial whether SLC9B2 plays a role in osteoclast differentiation or not. The sequence is that of Sodium/hydrogen exchanger 9B2 from Mus musculus (Mouse).